The chain runs to 70 residues: Myotoxin (70 aa).

The N-terminal stretch at 1–22 is a signal peptide; sequence MKILYLLFAFLFLAFLSEPGNA. 3 cysteine pairs are disulfide-bonded: cysteine 26/cysteine 58, cysteine 33/cysteine 52, and cysteine 40/cysteine 59.

Belongs to the crotamine-myotoxin family. Monomer. As to expression, expressed by the venom gland.

Its subcellular location is the secreted. In terms of biological role, cationic peptide that possesses multiple functions. It acts as a cell-penetrating peptide (CPP), and as a potent voltage-gated potassium channel (Kv) inhibitor. It exhibits antimicrobial activities, hind limb paralysis, and severe muscle necrosis by a non-enzymatic mechanism. The sequence is that of Myotoxin from Crotalus adamanteus (Eastern diamondback rattlesnake).